We begin with the raw amino-acid sequence, 149 residues long: Probable microsomal glutathione S-transferase (149 aa).

The next 2 helical transmembrane spans lie at 7–27 and 123–143; these read SIFP…IGLW and LSHI…GSSL.

Belongs to the MAPEG family.

The protein localises to the membrane. It catalyses the reaction RX + glutathione = an S-substituted glutathione + a halide anion + H(+). May perform the conjugation of reduced glutathione to electrophiles. In Dictyostelium discoideum (Social amoeba), this protein is Probable microsomal glutathione S-transferase (mgst).